A 310-amino-acid polypeptide reads, in one-letter code: MKKITVIDSHTGGEPTRLVIDGFPDLGRGSMAERLQILEREHDQWRRACVLEPRGSDVLVGALLCQPQAGDACAGVIFFNNSGYLGMCGHGTIGLVRSLYHLGRIDQGVHRIETPVGTVEATLHEDLSVSVRNVPAYRYRTQVMLQLPGHGKVHGDIAWGGNWFFLISDHGQRIALDNVEALTHYTRDVRQALEAAGITGAEGGVIDHIELFADDPQADSRNFVLCPGKAYDRSPCGTGTSAKLACLAADGKLAPGQAWRQASVIGSQFSAHYEKVGEQLIPILRGSAHISAEATLLLDDSDPFVWGIGS.

C88 (proton acceptor) is an active-site residue. Substrate contacts are provided by residues 89 to 90 (GH), H208, and D232. C236 acts as the Proton donor in catalysis. A substrate-binding site is contributed by 237 to 238 (GT).

It belongs to the proline racemase family.

The catalysed reaction is trans-4-hydroxy-L-proline = cis-4-hydroxy-D-proline. Catalyzes the epimerization of trans-4-hydroxy-L-proline (t4LHyp) to cis-4-hydroxy-D-proline (c4DHyp). Is likely involved in a degradation pathway that converts t4LHyp to alpha-ketoglutarate. Displays no proline racemase activity. The chain is 4-hydroxyproline 2-epimerase from Pseudomonas fluorescens (strain ATCC BAA-477 / NRRL B-23932 / Pf-5).